The chain runs to 563 residues: Arginine--tRNA ligase (563 aa).

The short motif at 121 to 131 (PNIAKPFSIGH) is the 'HIGH' region element.

Belongs to the class-I aminoacyl-tRNA synthetase family. Monomer.

Its subcellular location is the cytoplasm. The catalysed reaction is tRNA(Arg) + L-arginine + ATP = L-arginyl-tRNA(Arg) + AMP + diphosphate. The chain is Arginine--tRNA ligase from Streptococcus mutans serotype c (strain ATCC 700610 / UA159).